An 864-amino-acid polypeptide reads, in one-letter code: 3-O-alpha-D-mannopyranosyl-alpha-D-mannopyranose xylosylphosphotransferase (864 aa).

Positions Met1–Ile66 are disordered. The Cytoplasmic segment spans residues Met1 to Thr82. Low complexity-rich tracts occupy residues Ser16–Pro29 and Ser42–Leu52. The chain crosses the membrane as a helical span at residues Leu83–Leu103. Residues Ser104–Asp864 lie on the Lumenal side of the membrane. 3 N-linked (GlcNAc...) asparagine glycosylation sites follow: Asn200, Asn301, and Asn583.

The protein belongs to the XPT1 family. The cofactor is Mn(2+).

It localises to the golgi apparatus membrane. The enzyme catalyses 3-alpha-D-mannopyranosyl-alpha-D-mannopyranose + UDP-alpha-D-xylose = 3-O-(6-O-alpha-D-xylosylphospho-alpha-D-mannopyranosyl)-alpha-D-mannopyranose + UMP + H(+). Functionally, xylosylphosphotransferase that is specific for UDP-xylose as a donor and mannose as an acceptor to form a xylose-alpha-1-phosphate-6-mannose linkage. Functions in the O-glycosylation of proteins en route through the secretory pathway. The sequence is that of 3-O-alpha-D-mannopyranosyl-alpha-D-mannopyranose xylosylphosphotransferase (XPT1) from Cryptococcus neoformans var. grubii (Filobasidiella neoformans var. grubii).